Reading from the N-terminus, the 784-residue chain is Toll-like receptor 2 (784 aa).

The first 20 residues, 1 to 20 (MPRALWTAWVWAVIILSMEG), serve as a signal peptide directing secretion. The Extracellular portion of the chain corresponds to 21 to 587 (ASHQASSLSC…ARLSLSECHR (567 aa)). Cysteine 30 and cysteine 36 form a disulfide bridge. LRR repeat units follow at residues 54-77 (VKSL…RCVN), 78-101 (LKTL…HLRN), 102-125 (LEYL…SLYA), 126-150 (LKFL…HLPN), 151-175 (LRTL…GLIF), 176-199 (LEEL…SIQN), 200-223 (ISHL…IVSS), 224-250 (LDCL…MNTS), 251-278 (VKKL…YVSG), 279-308 (ILEV…HLGN), 309-337 (VETL…LTGK), 338-361 (VKRV…HLKS), 362-388 (LEYL…AWPF), 389-414 (LQTL…TLKN), 415-437 (LNNL…WPGK), 438-457 (MKQL…CLPQ), 458-478 (TLEI…ILPQ), 479-500 (LKEL…FLPV), and 501-524 (LSVM…SFPQ). An N-linked (GlcNAc...) asparagine glycan is attached at asparagine 114. Asparagine 199 carries N-linked (GlcNAc...) asparagine glycosylation. Residue asparagine 248 is glycosylated (N-linked (GlcNAc...) asparagine). A disulfide bridge links cysteine 353 with cysteine 382. Cysteines 432 and 454 form a disulfide. Residue asparagine 442 is glycosylated (N-linked (GlcNAc...) asparagine). The LRRCT domain maps to 525–579 (LKALEAGGNNFICSCDFLSFTQGQQALARVLVDWPDGYRCDAPSHVRGQRVQDAR). Residues 588-608 (AAVVSAVCCALFLLLLLTGVL) form a helical membrane-spanning segment. Residues 609-784 (CHRFHGLWYM…WLNLRAAIRS (176 aa)) lie on the Cytoplasmic side of the membrane. Positions 639–782 (LCYDAFVSYS…AFWLNLRAAI (144 aa)) constitute a TIR domain. Lysine 754 participates in a covalent cross-link: Glycyl lysine isopeptide (Lys-Gly) (interchain with G-Cter in ubiquitin). The ATG16L1-binding motif signature appears at 761-778 (YLEWPTDETQQEAFWLNL).

The protein belongs to the Toll-like receptor family. In terms of assembly, interacts with LY96, TLR1 and TLR6 (via extracellular domain). TLR2 seems to exist in heterodimers with either TLR1 or TLR6 before stimulation by the ligand. The heterodimers form bigger oligomers in response to their corresponding ligands as well as further heterotypic associations with other receptors such as CD14 and/or CD36. Binds MYD88 (via TIR domain). Interacts with TICAM1. Interacts with CNPY3. Interacts with ATG16L1. Interacts with PPP1R11. Interacts with TICAM2. Interacts with TIRAP. Ubiquitinated at Lys-754 by PPP1R11, leading to its degradation. Deubiquitinated by USP2. Post-translationally, glycosylation of Asn-442 is critical for secretion of the N-terminal ectodomain of TLR2.

Its subcellular location is the membrane. It localises to the cytoplasmic vesicle. It is found in the phagosome membrane. The protein localises to the membrane raft. In terms of biological role, cooperates with LY96 to mediate the innate immune response to bacterial lipoproteins and other microbial cell wall components. Cooperates with TLR1 or TLR6 to mediate the innate immune response to bacterial lipoproteins or lipopeptides. Acts via MYD88 and TRAF6, leading to NF-kappa-B activation, cytokine secretion and the inflammatory response. May also promote apoptosis in response to lipoproteins. Forms activation clusters composed of several receptors depending on the ligand, these clusters trigger signaling from the cell surface and subsequently are targeted to the Golgi in a lipid-raft dependent pathway. Forms the cluster TLR2:TLR6:CD14:CD36 in response to diacylated lipopeptides and TLR2:TLR1:CD14 in response to triacylated lipopeptides. This chain is Toll-like receptor 2 (TLR2), found in Capra hircus (Goat).